We begin with the raw amino-acid sequence, 448 residues long: Vicilin Cor a 11.0101 (448 aa).

The segment covering 1–44 has biased composition (basic and acidic residues); sequence MLPKEDPELKKCKHKCRDERQFDEQQRRDGKQICEEKARERQQE. The tract at residues 1 to 66 is disordered; the sequence is MLPKEDPELK…QEENPYVFQD (66 aa). The N-linked (GlcNAc...) asparagine glycan is linked to Asn47. 2 Cupin type-1 domains span residues 84–220 and 263–418; these read ENFT…EQLE and INLL…REVE. Residue Asn301 is glycosylated (N-linked (GlcNAc...) asparagine). Cys333, His335, and His362 together coordinate Cu cation.

This sequence belongs to the 7S seed storage protein family. In terms of assembly, homotrimer. Homohexamer. Post-translationally, N-glycosylated at Asn-301 mostly with xylosylated paucimannosidic-type N-glycan MMX (an N-linked glycan with beta-1,2-xylose residue in the structure) and also with MMXF (a complex N-linked glycan with alpha-1,3-fucose and beta-1,2-xylose residues in the structure). A mixture of proteolytically processed and unprocessed subunits exist. Expressed in seed (at protein level). Expressed in seed.

In terms of biological role, seed storage protein. Does not have superoxide dismutase (SOD) activity. The protein is Vicilin Cor a 11.0101 of Corylus avellana (European hazel).